The following is a 211-amino-acid chain: Proteasome subunit beta (211 aa).

A propeptide spans 1-9 (MSEAETLKG) (removed in mature form; by autocatalysis). Catalysis depends on Thr10, which acts as the Nucleophile.

It belongs to the peptidase T1B family. In terms of assembly, the 20S proteasome core is composed of 14 alpha and 14 beta subunits that assemble into four stacked heptameric rings, resulting in a barrel-shaped structure. The two inner rings, each composed of seven catalytic beta subunits, are sandwiched by two outer rings, each composed of seven alpha subunits. The catalytic chamber with the active sites is on the inside of the barrel. Has a gated structure, the ends of the cylinder being occluded by the N-termini of the alpha-subunits. Is capped at one or both ends by the proteasome regulatory ATPase, PAN.

It localises to the cytoplasm. The catalysed reaction is Cleavage of peptide bonds with very broad specificity.. With respect to regulation, the formation of the proteasomal ATPase PAN-20S proteasome complex, via the docking of the C-termini of PAN into the intersubunit pockets in the alpha-rings, triggers opening of the gate for substrate entry. Interconversion between the open-gate and close-gate conformations leads to a dynamic regulation of the 20S proteasome proteolysis activity. Its function is as follows. Component of the proteasome core, a large protease complex with broad specificity involved in protein degradation. The chain is Proteasome subunit beta from Methanosphaerula palustris (strain ATCC BAA-1556 / DSM 19958 / E1-9c).